A 351-amino-acid chain; its full sequence is Auxin efflux carrier component 5 (351 aa).

The next 10 helical transmembrane spans lie at 7–27, 39–59, 71–91, 100–120, 132–152, 210–230, 234–254, 271–291, 295–315, and 329–349; these read VYKV…GYGS, CDAI…IEFT, FIAA…LWAK, WSIT…GVPL, LVVQ…LFVL, ILGI…PGIL, ILIM…IFMA, MVLK…VLGL, VLRV…FIFA, and VIFG…ALEF.

Belongs to the auxin efflux carrier (TC 2.A.69.1) family. Expressed in elongating parts of hypocotyl, cotyledon vasculature and guard cells. Detected in root pericycle and root tip and at later developmental stages in leaves, stems and flowers. Expressed in veins of mature leaves.

Its subcellular location is the endoplasmic reticulum membrane. It localises to the cell membrane. Its function is as follows. Auxin transporter regulating intracellular auxin homeostasis and metabolism. Mediates the auxin transport from the cytosol into the lumen of the endoplasmic reticulum. May also act as an auxin efflux carrier when located to the cell membrane. PIN5 and PIN8 may have an antagonistic/compensatory activity. Involved in unfolded protein response (UPR) activation. Involved in the control of vein patterning. Promotes vein formation. PIN5, PIN6, and PIN8 control vein network geometry, but they are expressed in mutually exclusive domains of leaf vascular cells. This chain is Auxin efflux carrier component 5, found in Arabidopsis thaliana (Mouse-ear cress).